A 542-amino-acid chain; its full sequence is Putative sodium-dependent excitatory amino acid transporter glt-6 (542 aa).

The Cytoplasmic segment spans residues 1 to 15 (MKSKRRDDIVQFCRE). The next 3 membrane-spanning stretches (helical) occupy residues 16 to 36 (NTLLVMTMFSVFLGVVLGFGL), 55 to 75 (IFMQVLKMMILPLIFSSLISA), and 93 to 113 (LYYLSTAVLATILGIFLVTVI). Residues 114 to 191 (HPGDPSIKGT…IVKRSIGMTK (78 aa)) lie on the Extracellular side of the membrane. A glycan (N-linked (GlcNAc...) asparagine) is linked at asparagine 175. 5 consecutive transmembrane segments (helical) span residues 192-212 (GMNILGIIVFCTGFGIVISQL), 234-254 (VVTLMWFAPLGITCLICGNLL), 265-285 (VLALYVFTVCAGLILHTIITV), 303-323 (GMIQAAVTAFGTASGGATLPM), and 386-406 (TIASIGLGSVPAGLVSILLIL). Positions 505-517 (RIGSRIGSRRPSS) are enriched in low complexity. The disordered stretch occupies residues 505-542 (RIGSRIGSRRPSSTNLHLSWRNNNIEPPYTPLPNDENV). Residues 518–529 (TNLHLSWRNNNI) are compositionally biased toward polar residues.

It belongs to the dicarboxylate/amino acid:cation symporter (DAACS) (TC 2.A.23) family.

Its subcellular location is the membrane. In Caenorhabditis elegans, this protein is Putative sodium-dependent excitatory amino acid transporter glt-6 (glt-6).